We begin with the raw amino-acid sequence, 432 residues long: Amino-acid acetyltransferase (432 aa).

The N-acetyltransferase domain occupies 286 to 425 (ESLREATIED…ASLYNYQRNS (140 aa)).

The protein belongs to the acetyltransferase family. ArgA subfamily.

The protein resides in the cytoplasm. It carries out the reaction L-glutamate + acetyl-CoA = N-acetyl-L-glutamate + CoA + H(+). It participates in amino-acid biosynthesis; L-arginine biosynthesis; N(2)-acetyl-L-ornithine from L-glutamate: step 1/4. This chain is Amino-acid acetyltransferase, found in Ectopseudomonas mendocina (strain ymp) (Pseudomonas mendocina).